The sequence spans 152 residues: Large ribosomal subunit protein uL30 (152 aa).

Belongs to the universal ribosomal protein uL30 family. Part of the 50S ribosomal subunit.

The polypeptide is Large ribosomal subunit protein uL30 (Archaeoglobus fulgidus (strain ATCC 49558 / DSM 4304 / JCM 9628 / NBRC 100126 / VC-16)).